Reading from the N-terminus, the 27-residue chain is AnmTX Sco 9a-1 (27 aa).

Position 6 is a hydroxyproline (Pro-6). 2 disulfide bridges follow: Cys-7–Cys-18 and Cys-10–Cys-25.

In terms of biological role, has analgesic and anti-inflammatory activity in vivo. At a dose of 0.1 and 1 mg/kg, exhibits anti-inflammatory activity by reducing the volume of edema during 24 h better than the nonsteroidal anti-inflammatory drug, Diclofenac, at dose of 1 mg/kg in a mouse model of acute local lambda-carrageenan-induced inflammation. At a dose of 1 mg/kg, reduces the content of tumor necrosis factor-alpha (TNF-alpha). Demonstrates a significant analgesic effect on acute pain sensitivity in the carrageenan-induced thermal hyperalgesia model at doses of 0.1 and 1 mg/kg. Not toxic in mice, however stimulates exploratory motivation and active search behavior, and demonstrates an anti-anxiety effect. Does not exhibit any effect on currents of rat acid-sensing ion channels ASIC1a or ASIC3. The sequence is that of AnmTX Sco 9a-1 from Stomphia coccinea (Spotted swimming anemone).